A 177-amino-acid polypeptide reads, in one-letter code: Large ribosomal subunit protein uL6 (177 aa).

Belongs to the universal ribosomal protein uL6 family. Part of the 50S ribosomal subunit.

In terms of biological role, this protein binds to the 23S rRNA, and is important in its secondary structure. It is located near the subunit interface in the base of the L7/L12 stalk, and near the tRNA binding site of the peptidyltransferase center. In Brucella abortus (strain S19), this protein is Large ribosomal subunit protein uL6.